Here is a 186-residue protein sequence, read N- to C-terminus: Putative transcriptional regulator encoded by LINC00473 (186 aa).

The disordered stretch occupies residues 1–62; sequence MELSAAAGRR…RDCTPTCTNA (62 aa). A compositionally biased stretch (basic and acidic residues) spans 18–40; the sequence is FTGRHRTERSQERGSTPRKERSM.

May play a role in cAMP-mediated gene transcription. The sequence is that of Putative transcriptional regulator encoded by LINC00473 (LINC00473) from Homo sapiens (Human).